The sequence spans 438 residues: Arginine deiminase-like protein (438 aa).

It belongs to the arginine deiminase family.

The protein is Arginine deiminase-like protein of Mycoplasma pneumoniae (strain ATCC 29342 / M129 / Subtype 1) (Mycoplasmoides pneumoniae).